The sequence spans 560 residues: Protein yellow (560 aa).

The first 30 residues, 1–30 (MHVQDKGGIGALTALSLLLVAVTMVTPTQA), serve as a signal peptide directing secretion. N-linked (GlcNAc...) asparagine glycosylation is found at Asn153 and Asn224. Positions 452–492 (QYRPVLPQKPQTSWGPSPPSRSYLPSLGASPGGPGQVVSSV) are disordered. Low complexity predominate over residues 471 to 480 (SRSYLPSLGA).

Belongs to the major royal jelly protein family.

It localises to the secreted. Its function is as follows. Controls the pigmentation pattern of the adult cuticle and larval mouth parts. This is Protein yellow (y) from Drosophila pseudoobscura pseudoobscura (Fruit fly).